Consider the following 164-residue polypeptide: Lipoprotein signal peptidase (164 aa).

4 consecutive transmembrane segments (helical) span residues 11–31 (YWVL…AVLS), 41–61 (VIPS…FSFL), 64–84 (QGGW…AYLV), and 92–112 (FATL…GNVI). Catalysis depends on residues D122 and D140. A helical transmembrane segment spans residues 132–152 (FYPAFNIADSFICVGAVLAVL).

Belongs to the peptidase A8 family.

Its subcellular location is the cell inner membrane. It carries out the reaction Release of signal peptides from bacterial membrane prolipoproteins. Hydrolyzes -Xaa-Yaa-Zaa-|-(S,diacylglyceryl)Cys-, in which Xaa is hydrophobic (preferably Leu), and Yaa (Ala or Ser) and Zaa (Gly or Ala) have small, neutral side chains.. Its pathway is protein modification; lipoprotein biosynthesis (signal peptide cleavage). In terms of biological role, this protein specifically catalyzes the removal of signal peptides from prolipoproteins. This is Lipoprotein signal peptidase from Neisseria meningitidis serogroup C (strain 053442).